Consider the following 896-residue polypeptide: Bifunctional glutamine synthetase adenylyltransferase/adenylyl-removing enzyme (896 aa).

Positions 1-411 (MSDNRLDTAR…LFNEILSEPE (411 aa)) are adenylyl removase. The tract at residues 417–896 (NSEWQWAWQD…EVFGEEAATV (480 aa)) is adenylyl transferase.

It belongs to the GlnE family. The cofactor is Mg(2+).

The enzyme catalyses [glutamine synthetase]-O(4)-(5'-adenylyl)-L-tyrosine + phosphate = [glutamine synthetase]-L-tyrosine + ADP. It catalyses the reaction [glutamine synthetase]-L-tyrosine + ATP = [glutamine synthetase]-O(4)-(5'-adenylyl)-L-tyrosine + diphosphate. In terms of biological role, involved in the regulation of glutamine synthetase GlnA, a key enzyme in the process to assimilate ammonia. When cellular nitrogen levels are high, the C-terminal adenylyl transferase (AT) inactivates GlnA by covalent transfer of an adenylyl group from ATP to specific tyrosine residue of GlnA, thus reducing its activity. Conversely, when nitrogen levels are low, the N-terminal adenylyl removase (AR) activates GlnA by removing the adenylyl group by phosphorolysis, increasing its activity. The regulatory region of GlnE binds the signal transduction protein PII (GlnB) which indicates the nitrogen status of the cell. This chain is Bifunctional glutamine synthetase adenylyltransferase/adenylyl-removing enzyme, found in Neisseria meningitidis serogroup B (strain ATCC BAA-335 / MC58).